Reading from the N-terminus, the 88-residue chain is Large ribosomal subunit protein bL27 (88 aa).

Positions Met1 to Lys24 are disordered.

The protein belongs to the bacterial ribosomal protein bL27 family.

The polypeptide is Large ribosomal subunit protein bL27 (Synechococcus sp. (strain CC9605)).